The sequence spans 260 residues: Acetylglutamate kinase (260 aa).

Residues 46–47 (GG), arginine 68, and asparagine 160 contribute to the substrate site.

Belongs to the acetylglutamate kinase family. ArgB subfamily.

It is found in the cytoplasm. It carries out the reaction N-acetyl-L-glutamate + ATP = N-acetyl-L-glutamyl 5-phosphate + ADP. Its pathway is amino-acid biosynthesis; L-arginine biosynthesis; N(2)-acetyl-L-ornithine from L-glutamate: step 2/4. Catalyzes the ATP-dependent phosphorylation of N-acetyl-L-glutamate. The sequence is that of Acetylglutamate kinase from Shewanella sp. (strain W3-18-1).